The chain runs to 141 residues: uncharacterized protein (141 aa).

A run of 5 helical transmembrane segments spans residues 7–27, 34–54, 69–89, 97–117, and 121–141; these read FWALLSAAFAALTAVFAKVGV, FATLIRTVVILCVIAAIVAAT, LFLALSGLATGASWLAYFRAL, VAPLDKLSIVMVAIFGVLFLG, and NLMNWLGVAFIAAGALLLAVF. The 127-residue stretch at 14–140 folds into the EamA domain; the sequence is AFAALTAVFA…IAAGALLLAV (127 aa).

Belongs to the EamA transporter family.

The protein resides in the cell membrane. This is an uncharacterized protein from Sinorhizobium sp.